The sequence spans 361 residues: DNA replication and repair protein RecF (361 aa).

30–37 (GDNAQGKT) lines the ATP pocket.

Belongs to the RecF family.

It is found in the cytoplasm. In terms of biological role, the RecF protein is involved in DNA metabolism; it is required for DNA replication and normal SOS inducibility. RecF binds preferentially to single-stranded, linear DNA. It also seems to bind ATP. This chain is DNA replication and repair protein RecF, found in Clostridium novyi (strain NT).